Reading from the N-terminus, the 736-residue chain is MKEMSANTVLDSQRQQKHYGITSPISLASPKEIDHIYTQKLIDAMKPFGVFEDEEELNHRLVVLGKLNNLVKEWISDVSESKNLPPSVVATVGGKIFTFGSYRLGVHTKGADIDALCVAPRHVERSDFFQSFFEKLKHQDGIRNLRAVEDAFVPVIKFEFDGIEIDLVFARLAIQTISDNLDLRDDSRLRSLDIRCIRSLNGCRVTDEILHLVPNKETFRLTLRAVKLWAKRRGIYSNMLGFLGGVSWAMLVARTCQLYPNAAASTLVHKFFLVFSKWEWPNPVLLKQPEESNLNLPVWDPRVNPSDRYHLMPIITPAYPQQNSTYNVSTSTRTVMVEEFKQGLAVTDEILQGKSDWSKLLEPPNFFQKYRHYIVLTASASTEENHLEWVGLVESKIRVLVGNLERNEFITLAHVNPQSFPGNKEHHKDNNYVSMWFLGIIFRRVENAESVNIDLTYDIQSFTDTVYRQANNINMLKEGMKIEATHVKKKQLHHYLPAEILQKKKKQSLSDVNRSSGGLQSKRLSLDSSCLDSSRDTDNGTPFNSPASKSDSPSVGETERNSAEPAAVIVEKPLSVPPAQGLSIPVIGAKVDSTVKTVSPPTVCTIPTVVGRNVIPRITTPHNPAQGQPHLNGMSNITKTVTPKRSHSPSIDGTPKRLKDVEKFIRLESTFKDPRTAEERKRKSVDAIGGESMPIPTIDTSRKKRLPSKELPDSSSPVPANNIRVIKNSIRLTLNR.

N6-acetyllysine is present on K2. A phosphoserine mark is found at S23 and S29. ATP-binding positions include 99-101, T108, 112-114, D166, K227, Y236, and 245-246; these read FGS, DID, and GV. Positions 112, 114, and 166 each coordinate Mg(2+). The tract at residues 506-564 is disordered; sequence KQSLSDVNRSSGGLQSKRLSLDSSCLDSSRDTDNGTPFNSPASKSDSPSVGETERNSAE. Positions 509–519 are enriched in polar residues; that stretch reads LSDVNRSSGGL. Low complexity predominate over residues 521–532; it reads SKRLSLDSSCLD. S525 carries the post-translational modification Phosphoserine. Residues 539 to 555 show a composition bias toward polar residues; that stretch reads NGTPFNSPASKSDSPSV. S599 and S648 each carry phosphoserine. Phosphothreonine is present on T654. Positions 673–685 are enriched in basic and acidic residues; sequence DPRTAEERKRKSV. Positions 673–720 are disordered; it reads DPRTAEERKRKSVDAIGGESMPIPTIDTSRKKRLPSKELPDSSSPVPA. Residues S684 and S708 each carry the phosphoserine modification.

This sequence belongs to the poly(A) polymerase family. The cofactor is Mg(2+). It depends on Mn(2+) as a cofactor. As to expression, expressed predominantly in testis, and weakly in other tissues. Overexpressed in several tumors.

Its subcellular location is the nucleus. The enzyme catalyses RNA(n) + ATP = RNA(n)-3'-adenine ribonucleotide + diphosphate. Responsible for the post-transcriptional adenylation of the 3'-terminal of mRNA precursors and several small RNAs including signal recognition particle (SRP) RNA, nuclear 7SK RNA, U2 small nuclear RNA, and ribosomal 5S RNA. The chain is Poly(A) polymerase gamma from Homo sapiens (Human).